Reading from the N-terminus, the 548-residue chain is Cytochrome P450 monooxygenase lcsK (548 aa).

2 consecutive transmembrane segments (helical) span residues 28-48 (HAYPWRYVALLLAGSLSLWAF) and 68-88 (VLLFLYLGGLAGSVLLYRLFF). Residues Asn-172, Asn-223, Asn-242, and Asn-404 are each glycosylated (N-linked (GlcNAc...) asparagine). Residue Cys-487 coordinates heme.

It belongs to the cytochrome P450 family. It depends on heme as a cofactor.

It is found in the membrane. It participates in secondary metabolite biosynthesis. Cytochrome P450 monooxygenase; part of the gene cluster that mediates the biosynthesis of the lipopeptide antibiotics leucinostatins that show extensive biological activities, including antimalarial, antiviral, antibacterial, antifungal, and antitumor activities, as well as phytotoxic. Leucinostatin A contains nine amino acid residues, including the unusual amino acid 4-methyl-L-proline (MePro), 2-amino-6-hydroxy-4-methyl-8-oxodecanoic acid (AHyMeOA), 3-hydroxyleucine (HyLeu), alpha-aminoisobutyric acid (AIB), beta-Ala, a 4-methylhex-2-enoic acid at the N-terminus as well as a N1,N1-dimethylpropane-1,2-diamine (DPD) at the C-terminus. The biosynthesis of leucinostatins is probably initiated with the assembly of 4-methylhex-2-enoic acid by a reducing PKS. Two reducing polyketide synthases, lcsB and lcsC, have been identified in the cluster and it is not clear which is the one that assembles 4-methylhex-2-enoic acid since both contain KS, AT, DH, cMT, ER, KR and ACP domains. The polyketide residue might be transferred to the NRPS lcsA, mediated by two additional enzymes, the acyl-CoA ligase lcsD and the thioesterase lcsE. The linear polyketide carboxylic acid, which is released from PKS, is converted to a CoA thioester by lcsD, and then lcsE hydrolyzes the thiol bond and shuttles the polyketide intermediate to lcsA. The C domain of the first module catalyzed the condensation of 4-methylhex-2-enoic acid and MePro carried by domain A1, followed by successive condensations of nine amino acids to trigger the elongation of the linear peptide. A5 and A6 domains of lcsA are proposed to incorporate leucine, A2 AHyMeOA, and A3 incorporates HyLeu. A4, A7 and A8 incorporate AIB. The AHyMeOA in leucinostatin A activated by the A2 might be produced by the second PKS (lcsB or lcsC) present within the cluster. The MePro is probably produced via leucine cyclization and may originate from a separate pathway, independent of the cluster. Another nonproteinogenic amino acid, beta-Ala, could be produced by an aspartic acid decarboxylase also localized outside of the cluster. Two candidates are VFPBJ_01400 and VFPBJ_10476. The final peptide scaffold may be released by the NAD(P)H-dependent thioester reductase (TE) at the C-terminal region of lcsA. Transamination of the lcsA product by the transaminase lcsP may produce DPD at the C-terminus. Further hydroxylation steps performed alternatively by the cytochrome P450 monooxygenases lcsI, lcsK and lcsN then yield the non-methylated leucinostatins precursor. It is also possible that leucines can be hydroxylated prior to their incorporation into the peptide. Varying extents of methylation then lead to the formation of leucinostatins A and B. In Purpureocillium lilacinum (Paecilomyces lilacinus), this protein is Cytochrome P450 monooxygenase lcsK.